A 214-amino-acid chain; its full sequence is Nucleoside triphosphate pyrophosphatase (214 aa).

Residue D79 is the Proton acceptor of the active site.

Belongs to the Maf family. The cofactor is a divalent metal cation.

It is found in the cytoplasm. It carries out the reaction a ribonucleoside 5'-triphosphate + H2O = a ribonucleoside 5'-phosphate + diphosphate + H(+). The catalysed reaction is a 2'-deoxyribonucleoside 5'-triphosphate + H2O = a 2'-deoxyribonucleoside 5'-phosphate + diphosphate + H(+). Nucleoside triphosphate pyrophosphatase. May have a dual role in cell division arrest and in preventing the incorporation of modified nucleotides into cellular nucleic acids. The polypeptide is Nucleoside triphosphate pyrophosphatase (Rhodococcus jostii (strain RHA1)).